Here is a 239-residue protein sequence, read N- to C-terminus: Sugar fermentation stimulation protein homolog (239 aa).

Belongs to the SfsA family.

The chain is Sugar fermentation stimulation protein homolog from Desulforamulus reducens (strain ATCC BAA-1160 / DSM 100696 / MI-1) (Desulfotomaculum reducens).